The chain runs to 546 residues: Chaperonin GroEL 2 (546 aa).

ATP-binding positions include 30-33 (TLGP), K51, 87-91 (DGTTT), G415, and D495.

The protein belongs to the chaperonin (HSP60) family. As to quaternary structure, forms a cylinder of 14 subunits composed of two heptameric rings stacked back-to-back. Interacts with the co-chaperonin GroES.

The protein resides in the cytoplasm. It carries out the reaction ATP + H2O + a folded polypeptide = ADP + phosphate + an unfolded polypeptide.. Functionally, together with its co-chaperonin GroES, plays an essential role in assisting protein folding. The GroEL-GroES system forms a nano-cage that allows encapsulation of the non-native substrate proteins and provides a physical environment optimized to promote and accelerate protein folding. The chain is Chaperonin GroEL 2 from Burkholderia cenocepacia (strain HI2424).